A 100-amino-acid chain; its full sequence is Large ribosomal subunit protein bL21 (100 aa).

It belongs to the bacterial ribosomal protein bL21 family. As to quaternary structure, part of the 50S ribosomal subunit. Contacts protein L20.

Functionally, this protein binds to 23S rRNA in the presence of protein L20. In Wolbachia sp. subsp. Brugia malayi (strain TRS), this protein is Large ribosomal subunit protein bL21.